Reading from the N-terminus, the 37-residue chain is Cytochrome b6-f complex subunit 5 (37 aa).

A helical transmembrane segment spans residues 5–25 (LLCGIVLGLVPVTIAGLFVTA).

It belongs to the PetG family. In terms of assembly, the 4 large subunits of the cytochrome b6-f complex are cytochrome b6, subunit IV (17 kDa polypeptide, PetD), cytochrome f and the Rieske protein, while the 4 small subunits are PetG, PetL, PetM and PetN. The complex functions as a dimer.

It is found in the plastid. Its subcellular location is the chloroplast thylakoid membrane. Component of the cytochrome b6-f complex, which mediates electron transfer between photosystem II (PSII) and photosystem I (PSI), cyclic electron flow around PSI, and state transitions. PetG is required for either the stability or assembly of the cytochrome b6-f complex. This chain is Cytochrome b6-f complex subunit 5, found in Chlamydomonas reinhardtii (Chlamydomonas smithii).